The following is a 210-amino-acid chain: dTTP/UTP pyrophosphatase (210 aa).

Catalysis depends on Asp-85, which acts as the Proton acceptor.

It belongs to the Maf family. YhdE subfamily. Requires a divalent metal cation as cofactor.

Its subcellular location is the cytoplasm. The catalysed reaction is dTTP + H2O = dTMP + diphosphate + H(+). The enzyme catalyses UTP + H2O = UMP + diphosphate + H(+). In terms of biological role, nucleoside triphosphate pyrophosphatase that hydrolyzes dTTP and UTP. May have a dual role in cell division arrest and in preventing the incorporation of modified nucleotides into cellular nucleic acids. This is dTTP/UTP pyrophosphatase from Saccharophagus degradans (strain 2-40 / ATCC 43961 / DSM 17024).